A 263-amino-acid polypeptide reads, in one-letter code: MPFITKISTQKKNTERFNIFLDEKYAFSVDADVLVRFDLKKGKELDELDILEIQYGDDVKKAFNRAVEFLSYRMRSEKEVRDHLKKKETPDMVISEVIHKLYDYRYLNDKEFAEAYASTHKKTNGKGPDVLFRELKAKGIDDDTIKETLSAFTFDEQIQEALKHIGKILKKDKKLSTKEIRQRAQMQLQRKGFPFDVINAALEQTEYENDDEAEMEALKAHAEKAIRKYRYDGSYESGMKVKQYLFRKGFSIDDIDQFLQEEE.

The protein belongs to the RecX family.

It localises to the cytoplasm. Modulates RecA activity. This Bacillus velezensis (strain DSM 23117 / BGSC 10A6 / LMG 26770 / FZB42) (Bacillus amyloliquefaciens subsp. plantarum) protein is Regulatory protein RecX.